The chain runs to 182 residues: Ribosome-recycling factor (182 aa).

It belongs to the RRF family.

It localises to the cytoplasm. Its function is as follows. Responsible for the release of ribosomes from messenger RNA at the termination of protein biosynthesis. May increase the efficiency of translation by recycling ribosomes from one round of translation to another. The polypeptide is Ribosome-recycling factor (Prochlorococcus marinus (strain AS9601)).